Consider the following 472-residue polypeptide: Karilysin (472 aa).

The first 20 residues, 1 to 20, serve as a signal peptide directing secretion; it reads MKRFILLFFLSTIAIFKVYS. A propeptide spans 21–34 (activation peptide); that stretch reads QRLYDNGPLTGDNN. Zn(2+)-binding residues include His-102, Asp-104, His-117, His-133, and His-155. The active-site Proton donor/acceptor is Glu-156. Zn(2+) is bound by residues His-159 and His-165. Positions 196–386 are cleaved as a propeptide — removed in short form; that stretch reads YGYPFSISGP…AVSCSRTISP (191 aa). Positions 387–472 are cleaved as a propeptide — removed in long form; sequence FTLSPNPATD…QTYTQKLIKK (86 aa).

This sequence belongs to the peptidase M10A family. The cofactor is Zn(2+). Post-translationally, processes itself into the mature 18-kDa enzyme (Kly18) through sequential autoproteolytic cleavage at both the N- and C-termini. However, the maturation intermediate Kly38 is found to be more active than Kly18 and the rate for its processing is slow, which raises the question as to whether Kly38 is a physiologically relevant entity.

It localises to the secreted. With respect to regulation, autoprocessing and proteolytic activity are completely inhibited by EDTA and 1,10-phenanthroline in vitro. Proteolytic activity is 3-fold enhanced by Ca(2+) due to stabilization of the protein structure but inhibited by an excess of Zn(2+). Inhibitory studies of karilysin identified several phage display-selected peptides with apparent inhibition constants (Ki) in the micromolar range, among which is the tetrapeptide SWFP (Ki=10.7 uM). In terms of biological role, metalloprotease able to cleave casein, gelatin, elastin, fibrinogen and fibronectin. Shows exclusive preference for hydrophobic residues, especially Leu, Tyr and Met, at the P1' position of substrates, and for Pro or Ala at P3. Can efficiently cleave the antimicrobial peptide LL-37 which is a component of the immune system, leading to a significant reduction of its bactericidal activity. Is also able to inhibit all pathways of the human complement system. The classical and lectin complement pathways are inhibited because of the efficient degradation of mannose-binding lectin, ficolin-2, ficolin-3, and C4 by karilysin, whereas inhibition of the terminal pathway is caused by cleavage of C5. Thus, karilysin appears to be a major virulence factor of T.forsythia that contributes to evasion of the human immune response and periodontal disease. Seems to act synergistically with gingipains from the periodontal pathogen P.gingivalis present at the same sites of infection. This Tannerella forsythia (strain ATCC 43037 / JCM 10827 / CCUG 21028 A / KCTC 5666 / FDC 338) (Bacteroides forsythus) protein is Karilysin (kly).